The following is a 132-amino-acid chain: Small ribosomal subunit protein uS8 (132 aa).

Belongs to the universal ribosomal protein uS8 family. Part of the 30S ribosomal subunit. Contacts proteins S5 and S12.

One of the primary rRNA binding proteins, it binds directly to 16S rRNA central domain where it helps coordinate assembly of the platform of the 30S subunit. In Xanthomonas euvesicatoria pv. vesicatoria (strain 85-10) (Xanthomonas campestris pv. vesicatoria), this protein is Small ribosomal subunit protein uS8.